The following is a 488-amino-acid chain: N-succinylglutamate 5-semialdehyde dehydrogenase (488 aa).

221-226 (GSSRTG) serves as a coordination point for NAD(+). Residues Glu244 and Cys278 contribute to the active site.

It belongs to the aldehyde dehydrogenase family. AstD subfamily.

The enzyme catalyses N-succinyl-L-glutamate 5-semialdehyde + NAD(+) + H2O = N-succinyl-L-glutamate + NADH + 2 H(+). It participates in amino-acid degradation; L-arginine degradation via AST pathway; L-glutamate and succinate from L-arginine: step 4/5. Functionally, catalyzes the NAD-dependent reduction of succinylglutamate semialdehyde into succinylglutamate. This is N-succinylglutamate 5-semialdehyde dehydrogenase from Pseudomonas syringae pv. syringae (strain B728a).